Consider the following 243-residue polypeptide: Peptide deformylase, mitochondrial (243 aa).

A mitochondrion-targeting transit peptide spans 1-39 (MARLWGALSLWPLWAAVPWGGAAAVGVRACSSTAAPDGV). Gly-71, Pro-169, and Gly-171 together coordinate substrate. The segment at 165–175 (LVTFPEGCESV) is hydrophobic dimerization interface. Cys-172 and His-214 together coordinate Co(2+). Residue Glu-215 is part of the active site. Co(2+) is bound at residue His-218.

The protein belongs to the polypeptide deformylase family. Homodimer. Co(2+) is required as a cofactor. In terms of tissue distribution, ubiquitous.

Its subcellular location is the mitochondrion. It carries out the reaction N-terminal N-formyl-L-methionyl-[peptide] + H2O = N-terminal L-methionyl-[peptide] + formate. In terms of biological role, removes the formyl group from the N-terminal Met of newly synthesized proteins. This Homo sapiens (Human) protein is Peptide deformylase, mitochondrial.